Consider the following 388-residue polypeptide: MMGPFFYFTAYVSLLFAFTQALPTINGATAGLFSIEQKQYRSNRVNWPPYELWRTLRKHHRPPPRGMTAVSRIKAYGEHTINGTVEVTPSEYDTEFVNEITVGNDTLYVDIDTGSSDFWVFSSQLPEQSQRNHRIYHPEETGTKLPKHTWESKYGDGTGAAGNVFLDKVNLAGLKVSSQAVEAATWVSYEFVDQQTTDGVMGFGFDNFNLTCLKHQAPGFYDFGFIDGTKHVGKPTYLPIDSLRGWWETTFNGFSAGDIDNSTYRFKAVIGINFELPDTGTTFMLLPKQITEQYYSTVPASMYDRNNGGWAFPCNTTLPNFTIHINDHKAIVPGEHIRWAQLPGTNTCFGGLQPVNNPPAILGGTFLKSQFVIFDYDGPKIGFAAQRN.

An N-terminal signal peptide occupies residues M1–A21. N-linked (GlcNAc...) asparagine glycans are attached at residues N82 and N104. One can recognise a Peptidase A1 domain in the interval F96–A384. Residue D112 is part of the active site. N209 and N261 each carry an N-linked (GlcNAc...) asparagine glycan. D278 is an active-site residue. N-linked (GlcNAc...) asparagine glycosylation is found at N315 and N320.

Belongs to the peptidase A1 family.

The protein localises to the secreted. In terms of biological role, probable aspartic-type endopeptidase which contributes to virulence. The polypeptide is Probable aspartic-type endopeptidase MCYG_06955 (Arthroderma otae (strain ATCC MYA-4605 / CBS 113480) (Microsporum canis)).